Reading from the N-terminus, the 1091-residue chain is Ninein homolog (1091 aa).

The sufficient for binding to microtubules stretch occupies residues 1–361 (MEVSADPYEQ…AVEVDERHAS (361 aa)). Disordered stretches follow at residues 100–216 (YIES…TTSP), 456–483 (AQTS…KEEE), 525–602 (KAKK…EELT), and 616–639 (KAAK…SLEQ). 5 positions are modified to phosphoserine: S103, S107, S108, S113, and S141. Phosphothreonine is present on T144. A compositionally biased stretch (polar residues) spans 168 to 177 (VQRSSSQSDL). The interval 487 to 526 (LMEKLAALQMENAQLRDKTDELTIEIESLNVELIRSKTKA) is sufficient for interaction with ens. 2 stretches are compositionally biased toward basic and acidic residues: residues 527–537 (KKQEKQEKQED) and 547–563 (RRGD…ESPR). S594 carries the post-translational modification Phosphoserine. The segment covering 616-634 (KAAKEGRSLTPESRSKELE) has biased composition (basic and acidic residues). Residues S701 and S714 each carry the phosphoserine modification. The tract at residues 799–919 (AKSLADSKDE…TSCLSHEKCS (121 aa)) is disordered. Over residues 822–845 (SHKTASRNNLTTSETSIFSTTPFE) the composition is skewed to polar residues. Residues 846 to 860 (SSQSGPSPTNSGNSN) show a composition bias toward low complexity. A compositionally biased stretch (polar residues) spans 894-913 (ETSSTASGKSFESNSKTSCL).

In terms of assembly, interacts with ens.

It localises to the cytoplasm. The protein localises to the cytoskeleton. Its subcellular location is the microtubule organizing center. The protein resides in the centrosome. It is found in the perinuclear region. In terms of biological role, required for the positioning and anchorage of the microtubule minus-ends in various cells. In fat body cells, part of perinuclear non-centrosomal microtubule-organizing centers (ncMTOCs) which function to accommodate the organization of microtubule (MT) networks to control nuclear positioning and dynein motor-based retrograde endosomal trafficking. Within the ncMTOCs, Msp300 and shot anchors the ncMTOC at the nuclear surface and recruits the MT minus-end regulators Patronin and Nin for assembly, anchoring and/or stabilization of circumferential and radial MTs at the ncMTOC. This protein may also function with Patronin to recruit msps to the ncMTOC for the gamma-tubulin-independent elongation of radial MTs. In embryonic myotubes and larval myofibers, functions with ens to regulate myonuclear positioning and, as a consequence, is involved in muscle development. Likely functions by positively regulating ens. Essential for embryogenesis, likely by contributing to accurate chromosome segregation during early embryonic nuclear divisions. However, other reports found that it is not essential for embryogenesis or embryonic cellular divisions. This Drosophila melanogaster (Fruit fly) protein is Ninein homolog.